Here is a 318-residue protein sequence, read N- to C-terminus: Tumor necrosis factor ligand superfamily member 11 (318 aa).

Residues 1–47 (MRRANRDYGKYLRGSEEMGSCPGVPHEGPLHPAPSAPAPAPPPAASR) are Cytoplasmic-facing. The disordered stretch occupies residues 13 to 41 (RGSEEMGSCPGVPHEGPLHPAPSAPAPAP). Residues 31-41 (HPAPSAPAPAP) are compositionally biased toward pro residues. The helical; Signal-anchor for type II membrane protein transmembrane segment at 48–68 (FMFLALLGLGLGQVVCSIALF) threads the bilayer. Over 69 to 318 (LYFRAQMDPN…FGAFKVQDID (250 aa)) the chain is Extracellular. The THD domain maps to 165–314 (PFAHLTINAA…DATYFGAFKV (150 aa)). N-linked (GlcNAc...) asparagine glycosylation is found at asparagine 199 and asparagine 264.

It belongs to the tumor necrosis factor family. Homotrimer. Interacts with TNFRSF11A and TNFRSF11B. Interacts with FBN1 (via N-terminal domain) in a Ca(+2)-dependent manner. Interacts with TNFAIP6 (via both Link and CUB domains). The soluble form derives from the membrane form by proteolytic processing. In terms of tissue distribution, highly expressed in thymus and bone tissues.

The protein resides in the cell membrane. It localises to the secreted. Cytokine that binds to TNFRSF11B/OPG and to TNFRSF11A/RANK. Osteoclast differentiation and activation factor. Augments the ability of dendritic cells to stimulate naive T-cell proliferation. May be an important regulator of interactions between T-cells and dendritic cells and may play a role in the regulation of the T-cell-dependent immune response. May also play an important role in enhanced bone-resorption in humoral hypercalcemia of malignancy. Induces osteoclastogenesis by activating multiple signaling pathways in osteoclast precursor cells, chief among which is induction of long lasting oscillations in the intracellular concentration of Ca (2+) resulting in the activation of NFATC1, which translocates to the nucleus and induces osteoclast-specific gene transcription to allow differentiation of osteoclasts. During osteoclast differentiation, in a TMEM64 and ATP2A2-dependent manner induces activation of CREB1 and mitochondrial ROS generation necessary for proper osteoclast generation. The chain is Tumor necrosis factor ligand superfamily member 11 (Tnfsf11) from Rattus norvegicus (Rat).